The sequence spans 365 residues: Mitogen-activated protein kinase p38b (365 aa).

Positions 24-311 (YQNLQPVGQG…AEQALAHPYM (288 aa)) constitute a Protein kinase domain. ATP contacts are provided by residues 30-38 (VGQGAYGQV) and Lys53. Catalysis depends on Asp153, which acts as the Proton acceptor. At Thr183 the chain carries Phosphothreonine. A TXY motif is present at residues 183–185 (TGY). Tyr185 carries the post-translational modification Phosphotyrosine.

The protein belongs to the protein kinase superfamily. CMGC Ser/Thr protein kinase family. MAP kinase subfamily. Mg(2+) serves as cofactor. Post-translationally, dually phosphorylated on Thr-183 and Tyr-185, which activates the enzyme. In terms of tissue distribution, at mid-embryogenesis, highest expression is seen in developing anterior and posterior midguts. Almost ubiquitous expression throughout all development.

It localises to the nucleus. It carries out the reaction L-seryl-[protein] + ATP = O-phospho-L-seryl-[protein] + ADP + H(+). The catalysed reaction is L-threonyl-[protein] + ATP = O-phospho-L-threonyl-[protein] + ADP + H(+). Its activity is regulated as follows. Activated by threonine and tyrosine phosphorylation by Mkk3. Kinase involved in dpp signal transduction pathway in the process of wing morphogenesis when the levels of dpp are enhanced or inhibited. May down-regulate insect immunity gene expression after prolonged infection. This Drosophila melanogaster (Fruit fly) protein is Mitogen-activated protein kinase p38b.